Consider the following 318-residue polypeptide: Beta-ketoacyl-[acyl-carrier-protein] synthase III (318 aa).

Residues Cys113 and His245 contribute to the active site. The interval 246–250 (QANIR) is ACP-binding. Asn275 is an active-site residue.

Belongs to the thiolase-like superfamily. FabH family. As to quaternary structure, homodimer.

Its subcellular location is the cytoplasm. The enzyme catalyses malonyl-[ACP] + acetyl-CoA + H(+) = 3-oxobutanoyl-[ACP] + CO2 + CoA. It functions in the pathway lipid metabolism; fatty acid biosynthesis. Functionally, catalyzes the condensation reaction of fatty acid synthesis by the addition to an acyl acceptor of two carbons from malonyl-ACP. Catalyzes the first condensation reaction which initiates fatty acid synthesis and may therefore play a role in governing the total rate of fatty acid production. Possesses both acetoacetyl-ACP synthase and acetyl transacylase activities. Its substrate specificity determines the biosynthesis of branched-chain and/or straight-chain of fatty acids. The polypeptide is Beta-ketoacyl-[acyl-carrier-protein] synthase III (Wolbachia pipientis wMel).